A 519-amino-acid polypeptide reads, in one-letter code: Cyclic AMP-responsive element-binding protein 3-like protein 1 (519 aa).

The tract at residues 1–60 is required for transcriptional activation; the sequence is MDAVLEPFPADRLFPGSSFLDLGDLNESDFLNNAHFPEHLDHFTENMEDFSNDLFSSFFD. Residues 1–374 are Cytoplasmic-facing; sequence MDAVLEPFPA…YKMAATQTGT (374 aa). Residues 71-98 are disordered; the sequence is LDMELDSPTPGIQAEHSYSLSGDSAPQS. Residues 86 to 97 are compositionally biased toward polar residues; the sequence is HSYSLSGDSAPQ. A Glycyl lysine isopeptide (Lys-Gly) (interchain with G-Cter in SUMO2) cross-link involves residue lysine 184. The disordered stretch occupies residues 200 to 259; it reads DLVQMPPTPPSSHGSDSDGSQSPRSLPPSSPVRPMARSSTAISTSPLLTAPHKLQGTSGP. Low complexity predominate over residues 210–223; it reads SSHGSDSDGSQSPR. Polar residues predominate over residues 236–246; the sequence is RSSTAISTSPL. Residues 290 to 353 enclose the bZIP domain; it reads ALKRVRRKIK…RTLLQQLQKL (64 aa). The tract at residues 292–321 is basic motif; that stretch reads KRVRRKIKNKISAQESRRKKKEYVECLEKK. The interval 332–353 is leucine-zipper; it reads LWKKVETLENANRTLLQQLQKL. Residues 375–395 form a helical; Signal-anchor for type II membrane protein membrane-spanning segment; it reads CLMVAALCFVLVLGSLVPCLP. Positions 392-395 match the MBTPS2 recognition motif; sequence PCLP. Residues 396–519 are Lumenal-facing; sequence EFSSGSQTVK…LGPNTTIKLS (124 aa). The MBTPS1 recognition motif lies at 423-426; that stretch reads RSLL. The interval 484-519 is disordered; sequence EAWPKDGGNGTSPDFSHSKEWFHDRDLGPNTTIKLS. Asparagine 492 is a glycosylation site (N-linked (GlcNAc...) asparagine). Over residues 499-510 the composition is skewed to basic and acidic residues; the sequence is SHSKEWFHDRDL. Residue asparagine 513 is glycosylated (N-linked (GlcNAc...) asparagine).

This sequence belongs to the bZIP family. ATF subfamily. In terms of assembly, interacts with SMAD4, the interaction takes place upon TGFB1 induction and SMAD4 acts as a CREB3L1 coactivator to induce the expression of genes involved in assembly of collagen extracellular matrix. In terms of processing, upon ER stress or DNA damage, translocated to the Golgi apparatus, where it is processed by regulated intramembrane proteolysis (RIP) to release the cytosol-facing N-terminal transcription factor domain. The cleavage is performed sequentially by site-1 and site-2 proteases (S1P/MBTPS1 and S2P/MBTPS2). RIP is induced by TGFB1 and ceramide. N-glycosylated. Post-translationally, ubiquitinated by HRD1/SYVN1; undergoes 'Lys-48'-linked ubiquitination, followed by rapid proteasomal degradation under normal conditions. Upon ER stress, SYVN1 E3 ubiquitin-protein ligase dissociates from its substrate, ubiquitination does not occur and CREB3L1 is stabilized. As to expression, expressed in several tissues, with highest levels in pancreas and prostate. Expressed at relatively lower levels in brain.

Its subcellular location is the endoplasmic reticulum membrane. The protein localises to the nucleus. In terms of biological role, precursor of the transcription factor form (Processed cyclic AMP-responsive element-binding protein 3-like protein 1), which is embedded in the endoplasmic reticulum membrane with N-terminal DNA-binding and transcription activation domains oriented toward the cytosolic face of the membrane. In response to ER stress or DNA damage, transported to the Golgi, where it is cleaved in a site-specific manner by resident proteases S1P/MBTPS1 and S2P/MBTPS2. The released N-terminal cytosolic domain is translocated to the nucleus where it activates transcription of specific target genes involved in the cell-cycle progression inhibition. Functionally, transcription factor involved in cell type specific DNA damage and unfolded protein response (UPR). Binds the DNA consensus sequence 5'-GTGXGCXGC-3'. Plays a critical role in bone formation through the transcription of COL1A1, and possibly COL1A2, and the secretion of bone matrix proteins. Directly binds to the UPR element (UPRE)-like sequence in an osteoblast-specific COL1A1 promoter region and induces its transcription. Does not regulate COL1A1 in other tissues, such as skin. Required to protect astrocytes from ER stress-induced cell death. In astrocytes, binds to the cAMP response element (CRE) of the BiP/HSPA5 promoter and participate in its transcriptional activation. In astrocytes and osteoblasts, upon DNA damage, inhibits cell-cycle progression after G2/M phase by binding to promoters and activating transcription of genes encoding cell-cycle inhibitors, such as p21/CDKN1A. Required for TGFB1 to activate genes involved in the assembly of collagen extracellular matrix. Its function is as follows. (Microbial infection) May play a role in limiting virus spread by inhibiting proliferation of virus-infected cells. Upon infection with diverse DNA and RNA viruses, inhibits cell-cycle progression by binding to promoters and activating transcription of genes encoding cell-cycle inhibitors, such as p21/CDKN1A. This is Cyclic AMP-responsive element-binding protein 3-like protein 1 from Homo sapiens (Human).